We begin with the raw amino-acid sequence, 61 residues long: DNA gyrase inhibitor YacG (61 aa).

Positions 14, 17, 29, and 33 each coordinate Zn(2+).

It belongs to the DNA gyrase inhibitor YacG family. Interacts with GyrB. Zn(2+) is required as a cofactor.

Inhibits all the catalytic activities of DNA gyrase by preventing its interaction with DNA. Acts by binding directly to the C-terminal domain of GyrB, which probably disrupts DNA binding by the gyrase. In Zymomonas mobilis subsp. mobilis (strain ATCC 31821 / ZM4 / CP4), this protein is DNA gyrase inhibitor YacG.